The primary structure comprises 380 residues: Chaperone protein DnaJ (380 aa).

The region spanning 5–70 (DYYEILGVAK…QKRAAYDQYG (66 aa)) is the J domain. Residues 135–213 (GVSKEIRIPT…CHGHGRVEKS (79 aa)) form a CR-type zinc finger. Zn(2+)-binding residues include cysteine 148, cysteine 151, cysteine 165, cysteine 168, cysteine 187, cysteine 190, cysteine 201, and cysteine 204. 4 CXXCXGXG motif repeats span residues 148–155 (CGVCHGSG), 165–172 (CSTCHGAG), 187–194 (CPTCHGRG), and 201–208 (CNACHGHG).

The protein belongs to the DnaJ family. Homodimer. Zn(2+) is required as a cofactor.

It is found in the cytoplasm. Functionally, participates actively in the response to hyperosmotic and heat shock by preventing the aggregation of stress-denatured proteins and by disaggregating proteins, also in an autonomous, DnaK-independent fashion. Unfolded proteins bind initially to DnaJ; upon interaction with the DnaJ-bound protein, DnaK hydrolyzes its bound ATP, resulting in the formation of a stable complex. GrpE releases ADP from DnaK; ATP binding to DnaK triggers the release of the substrate protein, thus completing the reaction cycle. Several rounds of ATP-dependent interactions between DnaJ, DnaK and GrpE are required for fully efficient folding. Also involved, together with DnaK and GrpE, in the DNA replication of plasmids through activation of initiation proteins. The polypeptide is Chaperone protein DnaJ (Erwinia tasmaniensis (strain DSM 17950 / CFBP 7177 / CIP 109463 / NCPPB 4357 / Et1/99)).